A 614-amino-acid chain; its full sequence is Glucose oxidase 1 (614 aa).

The N-terminal stretch at 1-15 (MKSIILSCFVISAAA) is a signal peptide. FAD-binding residues include Leu52, Thr53, and Glu73. Asn112 carries an N-linked (GlcNAc...) asparagine glycan. The disordered stretch occupies residues 117–136 (IRSGNGLGGSTLTNGGSWTR). Ser126, Asn130, Gly131, and Ser133 together coordinate FAD. Asn184 and Asn191 each carry an N-linked (GlcNAc...) asparagine glycan. Cys187 and Cys229 are disulfide-bonded. Val273 is a binding site for FAD. 3 N-linked (GlcNAc...) asparagine glycosylation sites follow: Asn279, Asn383, and Asn416. His544 functions as the Proton acceptor in the catalytic mechanism. O2 is bound by residues Arg565 and Val566. The FAD site is built by Gly577 and Met589.

Belongs to the GMC oxidoreductase family. In terms of assembly, homodimer. FAD serves as cofactor.

It is found in the secreted. Its subcellular location is the cell wall. The protein localises to the cytoplasm. It localises to the extracellular space. The protein resides in the extracellular matrix. It carries out the reaction beta-D-glucose + O2 = D-glucono-1,5-lactone + H2O2. Functionally, glucose oxidase catalyzes the oxidation of beta-D-glucose to D-glucono-delta-lactone and hydrogen peroxide in the presence of molecular oxygen. The protein is Glucose oxidase 1 of Penicillium expansum (Blue mold rot fungus).